A 1120-amino-acid polypeptide reads, in one-letter code: TBC1 domain family member 8B (1120 aa).

GRAM domains follow at residues 145-212 (LKFE…EKTS) and 285-353 (EQFN…DKTN). Residues 487-674 (GIPETLRGEL…NVVDCFFYDG (188 aa)) form the Rab-GAP TBC domain. Residues 858–893 (NKDSLALWTFRLLDENSDCLINFKEFSSAIDIMYNG) enclose the EF-hand domain. Positions 1035-1066 (SPTSSAKGFSGTVCGSGGPSEEKTGSHLEKDP) are disordered. Residues 1054–1066 (SEEKTGSHLEKDP) are compositionally biased toward basic and acidic residues.

As to quaternary structure, interacts (via domain Rab-GAP TBC) with RAB11B (in GTP-bound form). Kidney (at protein level).

The protein localises to the cytoplasm. Its subcellular location is the cytosol. Its function is as follows. Involved in vesicular recycling, probably as a RAB11B GTPase-activating protein. The sequence is that of TBC1 domain family member 8B (TBC1D8B) from Homo sapiens (Human).